The chain runs to 1693 residues: Serine protease filzig (1693 aa).

The Cytoplasmic segment spans residues 1–47; the sequence is MFKWVTPASTATLSRCTLPATTAATTTTTAMAATRTATTTTRTTRPQ. Residues 48 to 68 form a helical; Signal-anchor for type II membrane protein membrane-spanning segment; the sequence is LLSIALTSLIIIVASFVPTTS. Residues 69–1693 are Extracellular-facing; the sequence is GFRSIETNGG…PWLRSITGVK (1625 aa). Disordered regions lie at residues 170-198, 212-321, 352-465, and 477-524; these read QQSA…QQPS, QQLD…NDDF, GLQD…THPG, and STGY…TTVS. Polar residues-rich tracts occupy residues 178-198 and 212-222; these read FESY…QQPS and QQLDSSSSISP. Composition is skewed to low complexity over residues 230–241 and 252–268; these read EPQQQEYQSESE and TSSS…SSAS. Residues 274–294 show a composition bias toward polar residues; the sequence is EPSQPADASNDQTTQKINKQP. Composition is skewed to low complexity over residues 358-404, 422-431, and 488-501; these read SSES…PTQK, QQKPQQVAKP, and EPPK…PAEQ. Residues 502–524 show a composition bias toward polar residues; sequence SYISSSTSAKRPTTGHNSPTTVS. N-linked (GlcNAc...) asparagine glycosylation is found at asparagine 541 and asparagine 582. 3 disordered regions span residues 615–635, 752–1007, and 1057–1090; these read QDAS…PGYG, HYNP…PPAT, and YAHR…TVLI. Residues 771 to 799 are compositionally biased toward polar residues; it reads SVSSHTTKVQEQMDETSNGYQQSETTSGY. Over residues 836–847 the composition is skewed to basic residues; sequence PRPKPSTKRPAV. Polar residues-rich tracts occupy residues 951–962 and 989–1000; these read QYDQPSAPSASY and KPISTSYVTGPS. N-linked (GlcNAc...) asparagine glycans are attached at residues asparagine 1215 and asparagine 1272. Low complexity-rich tracts occupy residues 1297 to 1307, 1331 to 1353, and 1362 to 1376; these read PVRTATTTRPK, TTTR…TTRR, and RVSS…SSAR. A disordered region spans residues 1297–1435; the sequence is PVRTATTTRP…TPNLAFHSPS (139 aa). Residues 1380 to 1391 show a composition bias toward acidic residues; it reads DEIVDEEDEEDV. The Peptidase S1 domain maps to 1449-1691; the sequence is IVGGKGSTFG…YKPWLRSITG (243 aa). Cysteines 1480 and 1496 form a disulfide. Active-site charge relay system residues include histidine 1495 and aspartate 1544. 2 disulfide bridges follow: cysteine 1608–cysteine 1627 and cysteine 1638–cysteine 1667. Serine 1642 (charge relay system) is an active-site residue.

This sequence belongs to the peptidase S1 family.

The protein localises to the cell membrane. Its function is as follows. Probable endopeptidase. In tracheal terminal cells, acts downstream of ich to regulate seamless tube growth and/or maintenance probably by processing lumenal matrix proteins. The sequence is that of Serine protease filzig from Drosophila melanogaster (Fruit fly).